Here is a 260-residue protein sequence, read N- to C-terminus: MKFEWLFLTIAPCDAAEPWQLGFQDAATPMMQGIIDLHHDIFFFLILILVFVSRILVRALWHFHYKKNPIPQRIVHGTTIEILRTIFPSIIPMFIAIPSFALLYSMDEVVVDPAITIKAIGHQWYRTYEYSDYNSSDEQSLTFDSYTIPEDDLELGQSRLLEVDNRVVVPAKTHLRIIVTPADVPHSWAVPSLGVKCDAVPGRLNQISISVQREGVYYGQCSEICGTNHAFTPIVVEAVPSKDYGSRVFNQLIPQTTGEA.

Residues 1–39 (MKFEWLFLTIAPCDAAEPWQLGFQDAATPMMQGIIDLHH) are Mitochondrial intermembrane-facing. The chain crosses the membrane as a helical span at residues 40–61 (DIFFFLILILVFVSRILVRALW). Topologically, residues 62–76 (HFHYKKNPIPQRIVH) are mitochondrial matrix. The helical transmembrane segment at 77–104 (GTTIEILRTIFPSIIPMFIAIPSFALLY) threads the bilayer. Over 105–260 (SMDEVVVDPA…QLIPQTTGEA (156 aa)) the chain is Mitochondrial intermembrane. Cu cation contacts are provided by H186, C221, E223, C225, and H229. E223 provides a ligand contact to Mg(2+).

Belongs to the cytochrome c oxidase subunit 2 family. In terms of assembly, component of the cytochrome c oxidase (complex IV, CIV), a multisubunit enzyme composed of a catalytic core of 3 subunits and several supernumerary subunits. The complex exists as a monomer or a dimer and forms supercomplexes (SCs) in the inner mitochondrial membrane with ubiquinol-cytochrome c oxidoreductase (cytochrome b-c1 complex, complex III, CIII). Cu cation is required as a cofactor.

It is found in the mitochondrion inner membrane. The enzyme catalyses 4 Fe(II)-[cytochrome c] + O2 + 8 H(+)(in) = 4 Fe(III)-[cytochrome c] + 2 H2O + 4 H(+)(out). Functionally, component of the cytochrome c oxidase, the last enzyme in the mitochondrial electron transport chain which drives oxidative phosphorylation. The respiratory chain contains 3 multisubunit complexes succinate dehydrogenase (complex II, CII), ubiquinol-cytochrome c oxidoreductase (cytochrome b-c1 complex, complex III, CIII) and cytochrome c oxidase (complex IV, CIV), that cooperate to transfer electrons derived from NADH and succinate to molecular oxygen, creating an electrochemical gradient over the inner membrane that drives transmembrane transport and the ATP synthase. Cytochrome c oxidase is the component of the respiratory chain that catalyzes the reduction of oxygen to water. Electrons originating from reduced cytochrome c in the intermembrane space (IMS) are transferred via the dinuclear copper A center (CU(A)) of subunit 2 and heme A of subunit 1 to the active site in subunit 1, a binuclear center (BNC) formed by heme A3 and copper B (CU(B)). The BNC reduces molecular oxygen to 2 water molecules using 4 electrons from cytochrome c in the IMS and 4 protons from the mitochondrial matrix. This is Cytochrome c oxidase subunit 2 (COX2) from Glycine max (Soybean).